A 333-amino-acid chain; its full sequence is MRFWRERGRENKEHMVAPLCGQIRVLVVGDSGVGKSSLVHLIVKGSSIVRPSQTIGCTVGVKHLTYASPASSSSIIKGDSERDFFVELWDVSGHERYKDCRSLFYSQINGVIFVHDLSQRTTKTNLQKWAGEVSVTGEFSAPLSSGGPGGLPVPYIVIGNKADIAAKGGTNGSSGNLVDAARHWVEKQGLLPHSDELPLSESFPSNVGLIMAAKEARYDKEALTKIFHMLIRRRYFSDELPSPSSAWSLSHAPSQRLDEGTSDEDQFYKRTSLREGDAYKYNTLPQHNLMQSPTLYPQQPPDRYNYAIPRFSLSSVEETSNGNGRSKRMDINV.

Residues 11–288 (NKEHMVAPLC…YKYNTLPQHN (278 aa)) form a small GTPase-like region. Residues 29–36 (GDSGVGKS), 90–94 (DVSGH), and 160–163 (NKAD) contribute to the GTP site. Residues 242–253 (SPSSAWSLSHAP) are compositionally biased toward polar residues. The interval 242-265 (SPSSAWSLSHAPSQRLDEGTSDED) is disordered.

It belongs to the small GTPase superfamily.

This chain is Small GTPase-like protein LIP2, found in Arabidopsis thaliana (Mouse-ear cress).